The sequence spans 371 residues: tRNA-specific 2-thiouridylase MnmA (371 aa).

ATP-binding positions include 12–19 and Met38; that span reads GMSGGVDS. The interaction with target base in tRNA stretch occupies residues 98–100; sequence NPD. Catalysis depends on Cys103, which acts as the Nucleophile. A disulfide bridge connects residues Cys103 and Cys200. Gly128 lines the ATP pocket. The segment at 150–152 is interaction with tRNA; the sequence is KDQ. The Cysteine persulfide intermediate role is filled by Cys200. The interval 312–313 is interaction with tRNA; sequence RY.

The protein belongs to the MnmA/TRMU family. As to quaternary structure, interacts with TusE.

The protein localises to the cytoplasm. It carries out the reaction S-sulfanyl-L-cysteinyl-[protein] + uridine(34) in tRNA + AH2 + ATP = 2-thiouridine(34) in tRNA + L-cysteinyl-[protein] + A + AMP + diphosphate + H(+). Functionally, catalyzes the 2-thiolation of uridine at the wobble position (U34) of tRNA(Lys), tRNA(Glu) and tRNA(Gln), leading to the formation of s(2)U34, the first step of tRNA-mnm(5)s(2)U34 synthesis. Sulfur is provided by IscS, via a sulfur-relay system. Binds ATP and its substrate tRNAs. This chain is tRNA-specific 2-thiouridylase MnmA, found in Yersinia pseudotuberculosis serotype O:1b (strain IP 31758).